We begin with the raw amino-acid sequence, 146 residues long: Ribonuclease H (146 aa).

Positions 1–143 constitute an RNase H type-1 domain; it reads MRKKIIIYTD…CDYLARQAIK (143 aa). Mg(2+) is bound by residues aspartate 10, glutamate 48, aspartate 70, and aspartate 135.

The protein belongs to the RNase H family. In terms of assembly, monomer. The cofactor is Mg(2+).

The protein localises to the cytoplasm. The catalysed reaction is Endonucleolytic cleavage to 5'-phosphomonoester.. Its function is as follows. Endonuclease that specifically degrades the RNA of RNA-DNA hybrids. This Prosthecochloris aestuarii (strain DSM 271 / SK 413) protein is Ribonuclease H.